The primary structure comprises 119 residues: UPF0344 protein lp_1373 (119 aa).

Helical transmembrane passes span 1–21 (MYLLGHIIGWLWLMLTVAIGL), 32–52 (FLILSRIGYLLIIITGVALAI), 60–80 (WLTLLKVILGLGTIGLIEVAF), and 92–112 (LVTLLVCGTLLTIICGIGLHW).

It belongs to the UPF0344 family.

The protein resides in the cell membrane. The protein is UPF0344 protein lp_1373 of Lactiplantibacillus plantarum (strain ATCC BAA-793 / NCIMB 8826 / WCFS1) (Lactobacillus plantarum).